Consider the following 286-residue polypeptide: Bifunctional protein FolD (286 aa).

Residues 170–172 (GHS) and Ile236 each bind NADP(+).

It belongs to the tetrahydrofolate dehydrogenase/cyclohydrolase family. In terms of assembly, homodimer.

The catalysed reaction is (6R)-5,10-methylene-5,6,7,8-tetrahydrofolate + NADP(+) = (6R)-5,10-methenyltetrahydrofolate + NADPH. It catalyses the reaction (6R)-5,10-methenyltetrahydrofolate + H2O = (6R)-10-formyltetrahydrofolate + H(+). It participates in one-carbon metabolism; tetrahydrofolate interconversion. Catalyzes the oxidation of 5,10-methylenetetrahydrofolate to 5,10-methenyltetrahydrofolate and then the hydrolysis of 5,10-methenyltetrahydrofolate to 10-formyltetrahydrofolate. This chain is Bifunctional protein FolD, found in Methanococcoides burtonii (strain DSM 6242 / NBRC 107633 / OCM 468 / ACE-M).